Reading from the N-terminus, the 299-residue chain is MDPTLISLGALALAGAAATVSGCAEDLESDVGSQSNPNSQVQLGPQMGNIHRYFNKAISGEPVSYGLYVAVAGTIAWALINAGLNAVLAIIVGSGVAAIVHGAYSVSAFLGRIVGQSKKFGQPVYMDVLTSHIGPIVGHGFIAVFTMTLAAYLATTALGNPFPLPLVALIFGITVGAIGSSTGDVHYGAEREYQKYPFGGGIPVANQGDIDIYAEYGVRNGLDSSYFCSRFGGPLTGLCFGLIIFLDGWRSILGNIVGGDLVTKTSIALLVGLLVVAVAAVINRKLEVYARNKYGPYRN.

Helical transmembrane passes span 57-77, 80-100, 133-153, 158-178, 226-246, and 262-282; these read AISGEPVSYGLYVAVAGTIAW, INAGLNAVLAIIVGSGVAAIV, IGPIVGHGFIAVFTMTLAAYL, LGNPFPLPLVALIFGITVGAI, YFCSRFGGPLTGLCFGLIIFL, and VTKTSIALLVGLLVVAVAAVI.

It belongs to the MtrE family. The complex is composed of 8 subunits; MtrA, MtrB, MtrC, MtrD, MtrE, MtrF, MtrG and MtrH.

The protein resides in the cell membrane. It carries out the reaction 5-methyl-5,6,7,8-tetrahydromethanopterin + coenzyme M + 2 Na(+)(in) = 5,6,7,8-tetrahydromethanopterin + methyl-coenzyme M + 2 Na(+)(out). Its pathway is one-carbon metabolism; methanogenesis from CO(2); methyl-coenzyme M from 5,10-methylene-5,6,7,8-tetrahydromethanopterin: step 2/2. In terms of biological role, part of a complex that catalyzes the formation of methyl-coenzyme M and tetrahydromethanopterin from coenzyme M and methyl-tetrahydromethanopterin. This is an energy-conserving, sodium-ion translocating step. The polypeptide is Tetrahydromethanopterin S-methyltransferase subunit E (Methanococcus maripaludis (strain C7 / ATCC BAA-1331)).